Consider the following 340-residue polypeptide: Nod factor export ATP-binding protein I (340 aa).

Residues 1–24 (MLKRKLGPEDLRRLETPAIERESH) are compositionally biased toward basic and acidic residues. The tract at residues 1-34 (MLKRKLGPEDLRRLETPAIERESHGQTSAKSSVP) is disordered. Residues 25–34 (GQTSAKSSVP) are compositionally biased toward polar residues. The ABC transporter domain occupies 42 to 272 (VDFAGVTKSY…HIGCQVMEIY (231 aa)). 74 to 81 (GPNGAGKS) lines the ATP pocket.

This sequence belongs to the ABC transporter superfamily. Lipooligosaccharide exporter (TC 3.A.1.102) family. In terms of assembly, the complex is composed of two ATP-binding proteins (NodI) and two transmembrane proteins (NodJ).

The protein localises to the cell inner membrane. In terms of biological role, part of the ABC transporter complex NodIJ involved in the export of the nodulation factors (Nod factors), the bacterial signal molecules that induce symbiosis and subsequent nodulation induction. Nod factors are LCO (lipo-chitin oligosaccharide), a modified beta-1,4-linked N-acetylglucosamine oligosaccharide. This subunit is responsible for energy coupling to the transport system. The polypeptide is Nod factor export ATP-binding protein I (Mesorhizobium japonicum (strain LMG 29417 / CECT 9101 / MAFF 303099) (Mesorhizobium loti (strain MAFF 303099))).